A 295-amino-acid chain; its full sequence is 4-hydroxy-tetrahydrodipicolinate synthase (295 aa).

Residue threonine 46 participates in pyruvate binding. Tyrosine 134 functions as the Proton donor/acceptor in the catalytic mechanism. Lysine 162 acts as the Schiff-base intermediate with substrate in catalysis. Isoleucine 205 contacts pyruvate.

This sequence belongs to the DapA family. Homotetramer; dimer of dimers.

The protein resides in the cytoplasm. The enzyme catalyses L-aspartate 4-semialdehyde + pyruvate = (2S,4S)-4-hydroxy-2,3,4,5-tetrahydrodipicolinate + H2O + H(+). It participates in amino-acid biosynthesis; L-lysine biosynthesis via DAP pathway; (S)-tetrahydrodipicolinate from L-aspartate: step 3/4. Its function is as follows. Catalyzes the condensation of (S)-aspartate-beta-semialdehyde [(S)-ASA] and pyruvate to 4-hydroxy-tetrahydrodipicolinate (HTPA). The polypeptide is 4-hydroxy-tetrahydrodipicolinate synthase (Anaeromyxobacter sp. (strain K)).